A 662-amino-acid polypeptide reads, in one-letter code: Envelope glycoprotein (662 aa).

The N-terminal stretch at 1-34 is a signal peptide; it reads MEGPTHPKPSKDKTFSWDLMILVGVLLRLDVGMA. Residues 35 to 606 are Extracellular-facing; that stretch reads NPSPHQIYNV…FNKSPWFTTL (572 aa). N-linked (GlcNAc...) asparagine; by host glycosylation is found at N43 and N58. 2 cysteine pairs are disulfide-bonded: C115/C132 and C124/C137. The interval 251 to 281 is disordered; it reads VLPDQKPPSRQSQIESRVTPHHSQGNGGTPG. Over residues 258–274 the composition is skewed to polar residues; the sequence is PSRQSQIESRVTPHHSQ. Residues N286, N322, and N327 are each glycosylated (N-linked (GlcNAc...) asparagine; by host). Intrachain disulfides connect C332/C335, C332/C559, and C551/C558. Positions 332-335 match the CXXC motif; it reads CWLC. Residues N351, N354, and N430 are each glycosylated (N-linked (GlcNAc...) asparagine; by host). A fusion peptide region spans residues 468–488; sequence ISLTVALMLGGLTVGGIAAGV. Coiled-coil stretches lie at residues 496–545 and 555–591; these read LETA…ILFL and KEEC…SQQG. The interval 534–550 is immunosuppression; that stretch reads LQNRRGLDILFLQEGGL. The CX6CC signature appears at 551 to 559; sequence CAALKEECC. A helical transmembrane segment spans residues 607-627; sequence ISSIMGPLLILLLILLFGPCI. Residue C626 is the site of S-palmitoyl cysteine; by host attachment. The Cytoplasmic segment spans residues 628-662; that stretch reads LNRLVQFVKDRISVVQALILTQQYQQIKQYDPDQP.

As to quaternary structure, the mature envelope protein (Env) consists of a trimer of SU-TM heterodimers attached by a labile interchain disulfide bond. Post-translationally, specific enzymatic cleavages in vivo yield mature proteins. Envelope glycoproteins are synthesized as an inactive precursor that is N-glycosylated and processed likely by host cell furin or by a furin-like protease in the Golgi to yield the mature SU and TM proteins. The cleavage site between SU and TM requires the minimal sequence [KR]-X-[KR]-R. The R-peptide is released from the C-terminus of the cytoplasmic tail of the TM protein upon particle formation as a result of proteolytic cleavage by the viral protease. Cleavage of this peptide is required for TM to become fusogenic. The CXXC motif is highly conserved across a broad range of retroviral envelope proteins. It is thought to participate in the formation of a labile disulfide bond possibly with the CX6CC motif present in the transmembrane protein. Isomerization of the intersubunit disulfide bond to an SU intrachain disulfide bond is thought to occur upon receptor recognition in order to allow membrane fusion. In terms of processing, the transmembrane protein is palmitoylated. Post-translationally, the R-peptide is palmitoylated.

The protein resides in the virion membrane. It localises to the host cell membrane. The surface protein (SU) attaches the virus to the host cell by binding to its receptor. This interaction triggers the refolding of the transmembrane protein (TM) and is thought to activate its fusogenic potential by unmasking its fusion peptide. Fusion occurs at the host cell plasma membrane. In terms of biological role, the transmembrane protein (TM) acts as a class I viral fusion protein. Under the current model, the protein has at least 3 conformational states: pre-fusion native state, pre-hairpin intermediate state, and post-fusion hairpin state. During viral and target cell membrane fusion, the coiled coil regions (heptad repeats) assume a trimer-of-hairpins structure, positioning the fusion peptide in close proximity to the C-terminal region of the ectodomain. The formation of this structure appears to drive apposition and subsequent fusion of viral and target cell membranes. Membranes fusion leads to delivery of the nucleocapsid into the cytoplasm. This is Envelope glycoprotein (env) from Felis catus (Cat).